The sequence spans 128 residues: UPF0325 protein YaeH (128 aa).

It belongs to the UPF0325 family.

The chain is UPF0325 protein YaeH from Shigella boydii serotype 18 (strain CDC 3083-94 / BS512).